Reading from the N-terminus, the 1262-residue chain is Isoleucine--tRNA ligase, cytoplasmic (1262 aa).

Methionine 1 carries the N-acetylmethionine modification. The short motif at 48-58 (PFATGLPHYGH) is the 'HIGH' region element. A 'KMSKS' region motif is present at residues 600–604 (KMSKR). Residue lysine 603 participates in ATP binding. A phosphoserine mark is found at serine 1047 and serine 1049. Threonine 1058 carries the post-translational modification Phosphothreonine.

Belongs to the class-I aminoacyl-tRNA synthetase family. In terms of assembly, part of a multisubunit complex that groups tRNA ligases for Arg (RARS1), Asp (DARS1), Gln (QARS1), Ile (IARS1), Leu (LARS1), Lys (KARS1), Met (MARS1) the bifunctional ligase for Glu and Pro (EPRS1) and the auxiliary subunits AIMP1/p43, AIMP2/p38 and EEF1E1/p18. As to expression, expressed in liver and muscle (at protein level).

The protein resides in the cytoplasm. The protein localises to the cytosol. It catalyses the reaction tRNA(Ile) + L-isoleucine + ATP = L-isoleucyl-tRNA(Ile) + AMP + diphosphate. Its function is as follows. Catalyzes the specific attachment of an amino acid to its cognate tRNA in a 2 step reaction: the amino acid (AA) is first activated by ATP to form AA-AMP and then transferred to the acceptor end of the tRNA. This is Isoleucine--tRNA ligase, cytoplasmic from Homo sapiens (Human).